The primary structure comprises 143 residues: FAD synthase (143 aa).

ATP-binding positions include 9–10 (TF), 14–17 (HPGH), and D92.

Belongs to the archaeal FAD synthase family. Homodimer. The cofactor is a divalent metal cation.

It carries out the reaction FMN + ATP + H(+) = FAD + diphosphate. The protein operates within cofactor biosynthesis; FAD biosynthesis; FAD from FMN: step 1/1. In terms of biological role, catalyzes the transfer of the AMP portion of ATP to flavin mononucleotide (FMN) to produce flavin adenine dinucleotide (FAD) coenzyme. This is FAD synthase from Methanococcoides burtonii (strain DSM 6242 / NBRC 107633 / OCM 468 / ACE-M).